A 525-amino-acid polypeptide reads, in one-letter code: Cytochrome P450 4V2 (525 aa).

A helical membrane pass occupies residues 13 to 33; it reads LLLWGAASAVSVAGATVLLNI. E329 and C467 together coordinate heme.

The protein belongs to the cytochrome P450 family. The cofactor is heme.

Its subcellular location is the endoplasmic reticulum membrane. It carries out the reaction dodecanoate + reduced [NADPH--hemoprotein reductase] + O2 = 12-hydroxydodecanoate + oxidized [NADPH--hemoprotein reductase] + H2O + H(+). The enzyme catalyses tetradecanoate + reduced [NADPH--hemoprotein reductase] + O2 = 14-hydroxytetradecanoate + oxidized [NADPH--hemoprotein reductase] + H2O + H(+). The catalysed reaction is hexadecanoate + reduced [NADPH--hemoprotein reductase] + O2 = 16-hydroxyhexadecanoate + oxidized [NADPH--hemoprotein reductase] + H2O + H(+). It catalyses the reaction (5Z,8Z,11Z,14Z,17Z)-eicosapentaenoate + reduced [NADPH--hemoprotein reductase] + O2 = 20-hydroxy-(5Z,8Z,11Z,14Z,17Z)-eicosapentaenoate + oxidized [NADPH--hemoprotein reductase] + H2O + H(+). It carries out the reaction (4Z,7Z,10Z,13Z,16Z,19Z)-docosahexaenoate + reduced [NADPH--hemoprotein reductase] + O2 = 22-hydroxy-(4Z,7Z,10Z,13Z,16Z,19Z)-docosahexaenoate + oxidized [NADPH--hemoprotein reductase] + H2O + H(+). Its pathway is lipid metabolism; fatty acid metabolism. Its activity is regulated as follows. Inhibited by N-hydroxy-N'-(4-n-butyl-2-methylphenyl formamidine)(HET0016) with an IC(50) of 38 nM. In terms of biological role, a cytochrome P450 monooxygenase involved in fatty acid metabolism in the eye. Catalyzes the omega-hydroxylation of polyunsaturated fatty acids (PUFAs) docosahexaenoate (DHA) and its precursor eicosapentaenoate (EPA), and may contribute to the homeostasis of these retinal PUFAs. Omega hydroxylates saturated fatty acids such as laurate, myristate and palmitate, the catalytic efficiency decreasing in the following order: myristate &gt; laurate &gt; palmitate (C14&gt;C12&gt;C16). Mechanistically, uses molecular oxygen inserting one oxygen atom into a substrate, and reducing the second into a water molecule, with two electrons provided by NADPH via cytochrome P450 reductase (CPR; NADPH-ferrihemoprotein reductase). The sequence is that of Cytochrome P450 4V2 (Cyp4v2) from Rattus norvegicus (Rat).